A 76-amino-acid chain; its full sequence is Kappa-actitoxin-Avd4c (76 aa).

The N-terminal stretch at 1 to 19 (MNKALFLCLVVLCAAVVFA) is a signal peptide. A propeptide spanning residues 20-31 (AEDLQKAKHAPF) is cleaved from the precursor. Cystine bridges form between cysteine 37/cysteine 72, cysteine 39/cysteine 65, and cysteine 55/cysteine 73.

Belongs to the sea anemone type 3 (BDS) potassium channel toxin family. In terms of tissue distribution, moderately expressed in the ectodermal tissue from the distal and proximal tentacles, body wall, and oral disk.

It localises to the secreted. The protein resides in the nematocyst. Blocks Kv3 voltage-gated potassium channels. Reduces blood pressure. The protein is Kappa-actitoxin-Avd4c of Anemonia viridis (Snakelocks anemone).